Consider the following 353-residue polypeptide: Photosystem II protein D1 (353 aa).

Threonine 2 is modified (N-acetylthreonine). Position 2 is a phosphothreonine (threonine 2). The next 3 membrane-spanning stretches (helical) occupy residues tyrosine 29–serine 46, histidine 118–leucine 133, and tryptophan 142–alanine 156. Histidine 118 contributes to the chlorophyll a binding site. Tyrosine 126 lines the pheophytin a pocket. [CaMn4O5] cluster is bound by residues aspartate 170 and glutamate 189. A helical membrane pass occupies residues phenylalanine 197–leucine 218. Histidine 198 is a chlorophyll a binding site. A quinone-binding positions include histidine 215 and serine 264 to phenylalanine 265. Histidine 215 serves as a coordination point for Fe cation. Histidine 272 serves as a coordination point for Fe cation. The helical transmembrane segment at phenylalanine 274–leucine 288 threads the bilayer. Residues histidine 332, glutamate 333, aspartate 342, and alanine 344 each coordinate [CaMn4O5] cluster. Positions serine 345–glycine 353 are excised as a propeptide.

Belongs to the reaction center PufL/M/PsbA/D family. In terms of assembly, PSII is composed of 1 copy each of membrane proteins PsbA, PsbB, PsbC, PsbD, PsbE, PsbF, PsbH, PsbI, PsbJ, PsbK, PsbL, PsbM, PsbT, PsbX, PsbY, PsbZ, Psb30/Ycf12, at least 3 peripheral proteins of the oxygen-evolving complex and a large number of cofactors. It forms dimeric complexes. It depends on The D1/D2 heterodimer binds P680, chlorophylls that are the primary electron donor of PSII, and subsequent electron acceptors. It shares a non-heme iron and each subunit binds pheophytin, quinone, additional chlorophylls, carotenoids and lipids. D1 provides most of the ligands for the Mn4-Ca-O5 cluster of the oxygen-evolving complex (OEC). There is also a Cl(-1) ion associated with D1 and D2, which is required for oxygen evolution. The PSII complex binds additional chlorophylls, carotenoids and specific lipids. as a cofactor. Tyr-161 forms a radical intermediate that is referred to as redox-active TyrZ, YZ or Y-Z. In terms of processing, C-terminally processed by CTPA; processing is essential to allow assembly of the oxygen-evolving complex and thus photosynthetic growth.

Its subcellular location is the plastid. The protein localises to the chloroplast thylakoid membrane. It catalyses the reaction 2 a plastoquinone + 4 hnu + 2 H2O = 2 a plastoquinol + O2. Functionally, photosystem II (PSII) is a light-driven water:plastoquinone oxidoreductase that uses light energy to abstract electrons from H(2)O, generating O(2) and a proton gradient subsequently used for ATP formation. It consists of a core antenna complex that captures photons, and an electron transfer chain that converts photonic excitation into a charge separation. The D1/D2 (PsbA/PsbD) reaction center heterodimer binds P680, the primary electron donor of PSII as well as several subsequent electron acceptors. This is Photosystem II protein D1 from Chlorokybus atmophyticus (Soil alga).